Here is a 236-residue protein sequence, read N- to C-terminus: MSEIALIGKKIGMTREFYKTGRLVPVTVIKMEKARVIQVIEEEKRGYKAVQLGFGKIKASKLTKAMKGLYAKKNTEAKKKLKEFRVKDTELYKEGNEFGLEIFNEVKFVDTTSKTIGKGFAGAMKRHNFGGLRATHGVSVSHRSHGSTGQRQDPGKVFKGKKMAGHMGDRVRTMQNLEIIKTDIENELLYLKGSIPGSKNTEILVKKSVKVINKMTINEKIAAAEEAKKTPDKKKK.

The span at 139–149 (SVSHRSHGSTG) shows a compositional bias: low complexity. Residues 139–165 (SVSHRSHGSTGQRQDPGKVFKGKKMAG) form a disordered region. Gln152 is subject to N5-methylglutamine.

The protein belongs to the universal ribosomal protein uL3 family. As to quaternary structure, part of the 50S ribosomal subunit. Forms a cluster with proteins L14 and L19. In terms of processing, methylated by PrmB.

One of the primary rRNA binding proteins, it binds directly near the 3'-end of the 23S rRNA, where it nucleates assembly of the 50S subunit. This Pelagibacter ubique (strain HTCC1062) protein is Large ribosomal subunit protein uL3.